Here is a 446-residue protein sequence, read N- to C-terminus: Chromosomal replication initiator protein DnaA (446 aa).

The domain I, interacts with DnaA modulators stretch occupies residues 1–92 (MENISDLWNS…SQAEEEIDLP (92 aa)). The domain II stretch occupies residues 93-109 (PSKPNAAQDDSNHLPQS). The interval 110-326 (MLNPKYTFDT…GALIRVVAYS (217 aa)) is domain III, AAA+ region. 4 residues coordinate ATP: G154, G156, K157, and T158. The segment at 327–446 (SLINKDINAD…QVEEINDILK (120 aa)) is domain IV, binds dsDNA.

It belongs to the DnaA family. As to quaternary structure, oligomerizes as a right-handed, spiral filament on DNA at oriC.

It localises to the cytoplasm. Plays an essential role in the initiation and regulation of chromosomal replication. ATP-DnaA binds to the origin of replication (oriC) to initiate formation of the DNA replication initiation complex once per cell cycle. Binds the DnaA box (a 9 base pair repeat at the origin) and separates the double-stranded (ds)DNA. Forms a right-handed helical filament on oriC DNA; dsDNA binds to the exterior of the filament while single-stranded (ss)DNA is stabiized in the filament's interior. The ATP-DnaA-oriC complex binds and stabilizes one strand of the AT-rich DNA unwinding element (DUE), permitting loading of DNA polymerase. After initiation quickly degrades to an ADP-DnaA complex that is not apt for DNA replication. Binds acidic phospholipids. In Bacillus cereus (strain 03BB102), this protein is Chromosomal replication initiator protein DnaA.